The following is a 31-amino-acid chain: Photosystem I reaction center subunit XII (31 aa).

The helical transmembrane segment at 7–26 (QVYVALVIALLPAVLAFRLS) threads the bilayer.

Belongs to the PsaM family.

The protein localises to the cellular thylakoid membrane. This chain is Photosystem I reaction center subunit XII, found in Thermosynechococcus vestitus (strain NIES-2133 / IAM M-273 / BP-1).